The primary structure comprises 153 residues: Arachidonate 5-lipoxygenase-activating protein (153 aa).

The Lumenal segment spans residues 1-8 (MDQETVGN). Residues 9-30 (VVLLAIVTLISVVQNGFFAHKV) form a helical membrane-spanning segment. The Cytoplasmic portion of the chain corresponds to 31-52 (EHESRTQNGRSFQRTGTLAFER). The helical transmembrane segment at 53–77 (VYTANQNCVDAYPTFLAVLWSAGLL) threads the bilayer. Residues 78 to 80 (CSQ) lie on the Lumenal side of the membrane. The chain crosses the membrane as a helical span at residues 81–102 (VPAAFAGLMYLLVRQKYFVGYL). The Cytoplasmic portion of the chain corresponds to 103-107 (GERTQ). Residues 108–115 (STPGYIFG) lie within the membrane without spanning it. Residues 116–128 (KRIILFLFLMSVA) form a helical membrane-spanning segment. Residues 129-153 (GIFNYYLIFFFGSDFENYIKTVTTT) lie on the Lumenal side of the membrane.

Belongs to the MAPEG family. As to quaternary structure, homotrimer. Interacts with LTC4S and ALOX5.

The protein localises to the nucleus membrane. It is found in the endoplasmic reticulum membrane. Functionally, required for leukotriene biosynthesis by ALOX5 (5-lipoxygenase). Anchors ALOX5 to the membrane. Binds arachidonic acid, and could play an essential role in the transfer of arachidonic acid to ALOX5. Binds to MK-886, a compound that blocks the biosynthesis of leukotrienes. The chain is Arachidonate 5-lipoxygenase-activating protein (ALOX5AP) from Macaca mulatta (Rhesus macaque).